Reading from the N-terminus, the 310-residue chain is Protein-methionine-sulfoxide reductase catalytic subunit MsrP (310 aa).

The segment at residues 1 to 45 (MRKTSSPRIAPSEITPRDLYHDRRRFMQAAAGAAAAALWPHWLSA) is a signal peptide (tat-type signal). Mo-molybdopterin-binding positions include Asn73, 76-77 (YE), Cys131, Thr166, Asn214, Arg219, and 230-232 (SAK).

It belongs to the MsrP family. In terms of assembly, heterodimer of a catalytic subunit (MsrP) and a heme-binding subunit (MsrQ). Requires Mo-molybdopterin as cofactor. In terms of processing, predicted to be exported by the Tat system. The position of the signal peptide cleavage has not been experimentally proven.

The protein localises to the periplasm. The catalysed reaction is L-methionyl-[protein] + a quinone + H2O = L-methionyl-(S)-S-oxide-[protein] + a quinol. It catalyses the reaction L-methionyl-[protein] + a quinone + H2O = L-methionyl-(R)-S-oxide-[protein] + a quinol. In terms of biological role, part of the MsrPQ system that repairs oxidized periplasmic proteins containing methionine sulfoxide residues (Met-O), using respiratory chain electrons. Thus protects these proteins from oxidative-stress damage caused by reactive species of oxygen and chlorine generated by the host defense mechanisms. MsrPQ is essential for the maintenance of envelope integrity under bleach stress, rescuing a wide series of structurally unrelated periplasmic proteins from methionine oxidation. The catalytic subunit MsrP is non-stereospecific, being able to reduce both (R-) and (S-) diastereoisomers of methionine sulfoxide. The sequence is that of Protein-methionine-sulfoxide reductase catalytic subunit MsrP from Methylococcus capsulatus (strain ATCC 33009 / NCIMB 11132 / Bath).